A 742-amino-acid polypeptide reads, in one-letter code: uncharacterized protein (742 aa).

A disordered region spans residues 1 to 102; sequence MMLLKRSNDN…FTQTKPNNTD (102 aa). Residues 18–28 show a composition bias toward low complexity; sequence NRQNRQNNRQN. The segment covering 48-57 has biased composition (basic and acidic residues); sequence RDSSRMDPVD. 2 stretches are compositionally biased toward polar residues: residues 60-69 and 77-99; these read TLISFTSGKP and HDTG…TKPN.

This is an uncharacterized protein from Acanthamoeba polyphaga mimivirus (APMV).